The sequence spans 209 residues: MEPLSPYPLKCSSPKAKVFLVFFSMVLCTGILCVLQLKFLRAKGGDFYSYEVTDAKGRTVALSKYRGKASLVVNVASGCPHTEANYRSLQELHREFGPSHFTVLAFPCNQFGESEPGTNKEIEAMAKRNYGVTFPVFSKIKILGSEAEPAYRFLVDSTKKEPRWNFWKYLVDPQGQVVKYWRPDETAESIRPEVASLVRQIIMKKKEDL.

Residues 18 to 40 traverse the membrane as a helical segment; sequence VFLVFFSMVLCTGILCVLQLKFL. The active site involves Cys79.

The protein belongs to the glutathione peroxidase family.

It is found in the membrane. It carries out the reaction 2 glutathione + H2O2 = glutathione disulfide + 2 H2O. The sequence is that of Probable glutathione peroxidase 8-B (gpx8-b) from Xenopus laevis (African clawed frog).